Consider the following 107-residue polypeptide: Guanylin (107 aa).

An N-terminal signal peptide occupies residues 1-20; it reads MNTFLLSALCLGAWAALVGA. A propeptide spanning residues 21-92 is cleaved from the precursor; that stretch reads VTVQDGDFSF…LNRLAVIAQD (72 aa). Cystine bridges form between C61–C74, C96–C104, and C99–C107.

Belongs to the guanylin family.

Its subcellular location is the secreted. Endogenous activator of intestinal guanylate cyclase. It stimulates this enzyme through the same receptor binding region as the heat-stable enterotoxins. The polypeptide is Guanylin (GUCA2A) (Cavia porcellus (Guinea pig)).